The sequence spans 341 residues: MQSITVALDAMGGDFGPRVTVPAAVQALSHFPELKVILIGDQSLITSQLSQLGTSTSSRLTILHSEKVISNSEKPSLALRNSQNSSMRMAIDLVSDQEADACVSGGNTGALMALSRFILKLLPGIERPALVSALPTISGKRTWMLDLGANVSCDADSLFQFAVMGSALAEEHLCRPPRVAVLNIGAEEIKGNDLVKRCAEMLSQTDAINFVGYIEGNQILHDVADVIVCDGFVGNVCLKASEGTAQLFIEKLKTSMMASTIKGWIARKLFSRLFNELKTLNPDQYNGASLLGLRGIVIKSHGSADVSAIVNALGEAVHEVKRQVPSRISDRLEAVLLERHY.

The protein belongs to the PlsX family. As to quaternary structure, homodimer. Probably interacts with PlsY.

Its subcellular location is the cytoplasm. The enzyme catalyses a fatty acyl-[ACP] + phosphate = an acyl phosphate + holo-[ACP]. Its pathway is lipid metabolism; phospholipid metabolism. Catalyzes the reversible formation of acyl-phosphate (acyl-PO(4)) from acyl-[acyl-carrier-protein] (acyl-ACP). This enzyme utilizes acyl-ACP as fatty acyl donor, but not acyl-CoA. The sequence is that of Phosphate acyltransferase from Vibrio parahaemolyticus serotype O3:K6 (strain RIMD 2210633).